Consider the following 109-residue polypeptide: Cytochrome c-550 (109 aa).

Residues cysteine 13, cysteine 16, histidine 17, and methionine 79 each coordinate heme c.

Post-translationally, binds 1 heme c group covalently per subunit.

In Nitrobacter winogradskyi (Nitrobacter agilis), this protein is Cytochrome c-550.